Consider the following 134-residue polypeptide: MVVAPYLAVAIGGSLGAMSRYLVTIMAQNAWGIKFPYGTLLVNTLGSFLAGFFLIVLVGRFSAEESFRLFLFTGFLGAFTTFSSFAAESLFMFEQGYWFKLITNILVNNVGSLSMVFIGTLVAKYVLLGHQGSN.

4 helical membrane passes run 7-27 (LAVA…TIMA), 38-58 (GTLL…IVLV), 69-89 (LFLF…AAES), and 110-130 (VGSL…LLGH). Residues glycine 77 and threonine 80 each contribute to the Na(+) site.

It belongs to the fluoride channel Fluc/FEX (TC 1.A.43) family.

The protein resides in the cell inner membrane. The catalysed reaction is fluoride(in) = fluoride(out). Na(+) is not transported, but it plays an essential structural role and its presence is essential for fluoride channel function. In terms of biological role, fluoride-specific ion channel. Important for reducing fluoride concentration in the cell, thus reducing its toxicity. The protein is Fluoride-specific ion channel FluC of Legionella pneumophila (strain Paris).